Here is a 183-residue protein sequence, read N- to C-terminus: Adenylate kinase (183 aa).

An ATP-binding site is contributed by 7–15 (GVAGVGKTT).

Belongs to the archaeal adenylate kinase family.

Its subcellular location is the cytoplasm. The enzyme catalyses AMP + ATP = 2 ADP. This Thermoplasma acidophilum (strain ATCC 25905 / DSM 1728 / JCM 9062 / NBRC 15155 / AMRC-C165) protein is Adenylate kinase (adkA).